A 332-amino-acid chain; its full sequence is Glycerol-3-phosphate dehydrogenase [NAD(P)+] (332 aa).

NADPH is bound by residues S11, F12, K32, and K106. Positions 106, 137, and 139 each coordinate sn-glycerol 3-phosphate. A141 contacts NADPH. The sn-glycerol 3-phosphate site is built by K192, D245, S255, R256, and N257. K192 functions as the Proton acceptor in the catalytic mechanism. R256 is a binding site for NADPH. NADPH contacts are provided by V280 and E282.

Belongs to the NAD-dependent glycerol-3-phosphate dehydrogenase family.

It localises to the cytoplasm. It catalyses the reaction sn-glycerol 3-phosphate + NAD(+) = dihydroxyacetone phosphate + NADH + H(+). The enzyme catalyses sn-glycerol 3-phosphate + NADP(+) = dihydroxyacetone phosphate + NADPH + H(+). Its pathway is membrane lipid metabolism; glycerophospholipid metabolism. Catalyzes the reduction of the glycolytic intermediate dihydroxyacetone phosphate (DHAP) to sn-glycerol 3-phosphate (G3P), the key precursor for phospholipid synthesis. In Staphylococcus aureus (strain bovine RF122 / ET3-1), this protein is Glycerol-3-phosphate dehydrogenase [NAD(P)+].